The sequence spans 577 residues: Methionine--tRNA ligase (577 aa).

The 'HIGH' region motif lies at 21–31; the sequence is PYANGPLHVGH. Zn(2+) contacts are provided by cysteine 153, cysteine 156, cysteine 166, and cysteine 169. The 'KMSKS' region signature appears at 355-359; the sequence is QMSTS. Threonine 358 is a binding site for ATP.

The protein belongs to the class-I aminoacyl-tRNA synthetase family. MetG type 1 subfamily. Monomer. Zn(2+) is required as a cofactor.

It is found in the cytoplasm. It catalyses the reaction tRNA(Met) + L-methionine + ATP = L-methionyl-tRNA(Met) + AMP + diphosphate. Is required not only for elongation of protein synthesis but also for the initiation of all mRNA translation through initiator tRNA(fMet) aminoacylation. The polypeptide is Methionine--tRNA ligase (Rubrobacter xylanophilus (strain DSM 9941 / JCM 11954 / NBRC 16129 / PRD-1)).